Here is a 427-residue protein sequence, read N- to C-terminus: Light-independent protochlorophyllide reductase subunit N (427 aa).

[4Fe-4S] cluster is bound by residues Cys28, Cys53, and Cys114.

The protein belongs to the BchN/ChlN family. As to quaternary structure, protochlorophyllide reductase is composed of three subunits; BchL, BchN and BchB. Forms a heterotetramer of two BchB and two BchN subunits. The cofactor is [4Fe-4S] cluster.

The enzyme catalyses chlorophyllide a + oxidized 2[4Fe-4S]-[ferredoxin] + 2 ADP + 2 phosphate = protochlorophyllide a + reduced 2[4Fe-4S]-[ferredoxin] + 2 ATP + 2 H2O. The protein operates within porphyrin-containing compound metabolism; bacteriochlorophyll biosynthesis (light-independent). Its function is as follows. Component of the dark-operative protochlorophyllide reductase (DPOR) that uses Mg-ATP and reduced ferredoxin to reduce ring D of protochlorophyllide (Pchlide) to form chlorophyllide a (Chlide). This reaction is light-independent. The NB-protein (BchN-BchB) is the catalytic component of the complex. This is Light-independent protochlorophyllide reductase subunit N from Jannaschia sp. (strain CCS1).